A 316-amino-acid chain; its full sequence is Bifunctional peptidase and (3S)-lysyl hydroxylase Jmjd7 (316 aa).

Positions 128 to 307 (VQKQCSNLPT…LKYSYFQLMD (180 aa)) constitute a JmjC domain. The Fe cation site is built by histidine 178, aspartate 180, and histidine 277.

In terms of assembly, homodimer; disulfide-linked. Interacts with DRG1 and DRG2. It depends on Fe(2+) as a cofactor.

Its subcellular location is the nucleus. It is found in the cytoplasm. It catalyses the reaction L-lysyl-[protein] + 2-oxoglutarate + O2 = (3S)-3-hydroxy-L-lysyl-[protein] + succinate + CO2. In terms of biological role, bifunctional enzyme that acts both as an endopeptidase and 2-oxoglutarate-dependent monooxygenase. Endopeptidase that cleaves histones N-terminal tails at the carboxyl side of methylated arginine or lysine residues, to generate 'tailless nucleosomes', which may trigger transcription elongation. Preferentially recognizes and cleaves monomethylated and dimethylated arginine residues of histones H2, H3 and H4. After initial cleavage, continues to digest histones tails via its aminopeptidase activity. Additionally, may play a role in protein biosynthesis by modifying the translation machinery. Acts as a Fe(2+) and 2-oxoglutarate-dependent monooxygenase, catalyzing (S)-stereospecific hydroxylation at C-3 of 'Lys-22' of DRG1 and 'Lys-21' of DRG2 translation factors (TRAFAC), promoting their interaction with ribonucleic acids (RNA). The protein is Bifunctional peptidase and (3S)-lysyl hydroxylase Jmjd7 of Mus musculus (Mouse).